The chain runs to 254 residues: Small ribosomal subunit protein uS2 (254 aa).

The tract at residues 228 to 254 is disordered; it reads DRGAEKEVEAAEEAPAAEAEAAPATEE. Over residues 240–254 the composition is skewed to low complexity; it reads EAPAAEAEAAPATEE.

Belongs to the universal ribosomal protein uS2 family.

This is Small ribosomal subunit protein uS2 from Flavobacterium johnsoniae (strain ATCC 17061 / DSM 2064 / JCM 8514 / BCRC 14874 / CCUG 350202 / NBRC 14942 / NCIMB 11054 / UW101) (Cytophaga johnsonae).